Here is a 445-residue protein sequence, read N- to C-terminus: Tryptophan 5-hydroxylase 1 (445 aa).

The ACT domain occupies 19–94 (AIIFSLKNEV…SIVSMNPTEH (76 aa)). S58 is subject to Phosphoserine; by PKA. Positions 236, 258, and 266 each coordinate L-tryptophan. Fe cation contacts are provided by H273, H278, and E318. L-tryptophan contacts are provided by S337 and I367.

This sequence belongs to the biopterin-dependent aromatic amino acid hydroxylase family. As to quaternary structure, homotetramer. Requires Fe(2+) as cofactor.

The enzyme catalyses (6R)-L-erythro-5,6,7,8-tetrahydrobiopterin + L-tryptophan + O2 = 5-hydroxy-L-tryptophan + (4aS,6R)-4a-hydroxy-L-erythro-5,6,7,8-tetrahydrobiopterin. It functions in the pathway aromatic compound metabolism; serotonin biosynthesis; serotonin from L-tryptophan: step 1/2. Its function is as follows. Oxidizes L-tryptophan to 5-hydroxy-l-tryptophan in the rate-determining step of serotonin biosynthesis. The protein is Tryptophan 5-hydroxylase 1 (TPH1) of Gallus gallus (Chicken).